Reading from the N-terminus, the 278-residue chain is Probable endonuclease 4 (278 aa).

The Zn(2+) site is built by His-67, His-107, Glu-141, Asp-173, His-176, His-210, Asp-223, His-225, and Glu-255.

Belongs to the AP endonuclease 2 family. Zn(2+) serves as cofactor.

It carries out the reaction Endonucleolytic cleavage to 5'-phosphooligonucleotide end-products.. Endonuclease IV plays a role in DNA repair. It cleaves phosphodiester bonds at apurinic or apyrimidinic (AP) sites, generating a 3'-hydroxyl group and a 5'-terminal sugar phosphate. In Natronomonas pharaonis (strain ATCC 35678 / DSM 2160 / CIP 103997 / JCM 8858 / NBRC 14720 / NCIMB 2260 / Gabara) (Halobacterium pharaonis), this protein is Probable endonuclease 4.